The sequence spans 352 residues: Rhodopsin (352 aa).

Over 1-36 (MNGTEGPFFYIPMVNTTGVVRSPYEYPQYYLVNPAA) the chain is Extracellular. Residues asparagine 2 and asparagine 15 are each glycosylated (N-linked (GlcNAc...) asparagine). The helical transmembrane segment at 37 to 61 (YACLGAYMFFLILVGFPVNFLTLYV) threads the bilayer. Topologically, residues 62-73 (TLEHKKLRTPLN) are cytoplasmic. The helical transmembrane segment at 74 to 96 (YILLNLAVADLFMVFGGFTTTIY) threads the bilayer. At 97 to 110 (TSMHGYFVLGRLGC) the chain is on the extracellular side. Cysteine 110 and cysteine 187 are disulfide-bonded. A helical transmembrane segment spans residues 111 to 133 (NIEGFFATLGGEIALWSLVVLAI). A 'Ionic lock' involved in activated form stabilization motif is present at residues 134–136 (ERW). Residues 134–152 (ERWVVVCKPISNFRFGENH) lie on the Cytoplasmic side of the membrane. The helical transmembrane segment at 153 to 173 (AIMGVAFTWFMASACAVPPLV) threads the bilayer. The Extracellular segment spans residues 174 to 202 (GWSRYIPEGMQCSCGIDYYTRAEGFNNES). An N-linked (GlcNAc...) asparagine glycan is attached at asparagine 200. Residues 203–224 (FVIYMFTVHFCIPLAVVGFCYG) form a helical membrane-spanning segment. Topologically, residues 225-252 (RLLCAVKEAAAAQQESETTQRAEREVSR) are cytoplasmic. A helical transmembrane segment spans residues 253-274 (MVVIMVIGFLVCWLPYASVAWY). Topologically, residues 275-286 (IFTHQGSEFGPL) are extracellular. Residues 287-308 (FMTIPAFFAKSSSIYNPMIYIC) traverse the membrane as a helical segment. An N6-(retinylidene)lysine modification is found at lysine 296. Over 309 to 352 (MNKQFRHCMITTLCCGKNPFEEEEGASTTKTEASSVSSSSVSPA) the chain is Cytoplasmic. S-palmitoyl cysteine attachment occurs at residues cysteine 322 and cysteine 323. The segment at 331–352 (EEGASTTKTEASSVSSSSVSPA) is disordered. Residues 342–352 (SSVSSSSVSPA) are compositionally biased toward low complexity.

It belongs to the G-protein coupled receptor 1 family. Opsin subfamily. Phosphorylated on some or all of the serine and threonine residues present in the C-terminal region. Post-translationally, contains one covalently linked retinal chromophore.

It is found in the membrane. The protein resides in the cell projection. It localises to the cilium. Its subcellular location is the photoreceptor outer segment. Functionally, photoreceptor required for image-forming vision at low light intensity. While most salt water fish species use retinal as chromophore, most freshwater fish use 3-dehydroretinal, or a mixture of retinal and 3-dehydroretinal. Light-induced isomerization of 11-cis to all-trans retinal triggers a conformational change that activates signaling via G-proteins. Subsequent receptor phosphorylation mediates displacement of the bound G-protein alpha subunit by arrestin and terminates signaling. The polypeptide is Rhodopsin (rho) (Gobius niger (Black goby)).